The chain runs to 1988 residues: Protein Ycf2 (1988 aa).

1337 to 1344 (GSIGTGRS) is an ATP binding site. Residues 1377-1396 (SDDDSDDIDDSGDIDDSDDI) form a disordered region.

Belongs to the Ycf2 family.

Its subcellular location is the plastid. The protein resides in the chloroplast stroma. Functionally, probable ATPase of unknown function. Its presence in a non-photosynthetic plant (Epifagus virginiana) and experiments in tobacco indicate that it has an essential function which is probably not related to photosynthesis. The sequence is that of Protein Ycf2 from Cucumis sativus (Cucumber).